The following is a 141-amino-acid chain: Ribonuclease VapC38 (141 aa).

2 residues coordinate Mg(2+): D5 and D102.

It belongs to the PINc/VapC protein family. It depends on Mg(2+) as a cofactor.

Its subcellular location is the secreted. Its function is as follows. Toxic component of a type II toxin-antitoxin (TA) system. An RNase. Its cognate antitoxin is VapB38. This Mycobacterium tuberculosis (strain ATCC 25618 / H37Rv) protein is Ribonuclease VapC38.